A 76-amino-acid chain; its full sequence is ATP synthase subunit c (76 aa).

Helical transmembrane passes span 8 to 28 and 55 to 75; these read LLAA…GVGI and VAFA…LIFV.

This sequence belongs to the ATPase C chain family. F-type ATPases have 2 components, F(1) - the catalytic core - and F(0) - the membrane proton channel. F(1) has five subunits: alpha(3), beta(3), gamma(1), delta(1), epsilon(1). F(0) has three main subunits: a(1), b(2) and c(10-14). The alpha and beta chains form an alternating ring which encloses part of the gamma chain. F(1) is attached to F(0) by a central stalk formed by the gamma and epsilon chains, while a peripheral stalk is formed by the delta and b chains.

It localises to the cell membrane. Functionally, f(1)F(0) ATP synthase produces ATP from ADP in the presence of a proton or sodium gradient. F-type ATPases consist of two structural domains, F(1) containing the extramembraneous catalytic core and F(0) containing the membrane proton channel, linked together by a central stalk and a peripheral stalk. During catalysis, ATP synthesis in the catalytic domain of F(1) is coupled via a rotary mechanism of the central stalk subunits to proton translocation. Its function is as follows. Key component of the F(0) channel; it plays a direct role in translocation across the membrane. A homomeric c-ring of between 10-14 subunits forms the central stalk rotor element with the F(1) delta and epsilon subunits. The sequence is that of ATP synthase subunit c from Dehalococcoides mccartyi (strain ATCC BAA-2266 / KCTC 15142 / 195) (Dehalococcoides ethenogenes (strain 195)).